A 238-amino-acid chain; its full sequence is Ribosomal RNA small subunit methyltransferase I (238 aa).

The protein belongs to the methyltransferase superfamily. RsmI family.

It is found in the cytoplasm. The catalysed reaction is cytidine(1402) in 16S rRNA + S-adenosyl-L-methionine = 2'-O-methylcytidine(1402) in 16S rRNA + S-adenosyl-L-homocysteine + H(+). Its function is as follows. Catalyzes the 2'-O-methylation of the ribose of cytidine 1402 (C1402) in 16S rRNA. This is Ribosomal RNA small subunit methyltransferase I from Mesomycoplasma conjunctivae (strain ATCC 25834 / NCTC 10147 / HRC/581) (Mycoplasma conjunctivae).